We begin with the raw amino-acid sequence, 286 residues long: MIINHNMSAMFAQRTLGNTNLSVQKNMEKLSSGLRINRAGDDASGLAVSEKMRSQIRGLNQASTNAQNGISFIQVAESYLQETTDVIQRIRELSVQSANGIYSAEDRMYIQVEVSQLVAEIDRIASHAQFNGMNMLTGRFARETGENTVTASMWFHIGANMDQRTRAYIGTMTAAALGVRDVGDESILNIDDPEKANRAIGTLDEAIKKINKQRADLGAYQNRLEYTVIGVNVAAENLQAAESRIRDVDMAKEMVDYTKNQILVQSGTAMLAQANQATQSVLSLLR.

Belongs to the bacterial flagellin family. In terms of assembly, the flagellum consists of an outer layer composed of repeating units of FlaA around a core that contains several antigenically related polypeptides.

The protein localises to the periplasmic flagellum. It is found in the periplasm. In terms of biological role, component of the core of the flagella. This chain is Flagellar filament 33 kDa core protein, found in Treponema phagedenis.